The chain runs to 87 residues: Long neurotoxin LlLong (87 aa).

The N-terminal stretch at 1–20 is a signal peptide; sequence KTLLLTLVVVTIICLDFGYT. 5 disulfide bridges follow: cysteine 23–cysteine 41, cysteine 34–cysteine 62, cysteine 47–cysteine 51, cysteine 66–cysteine 77, and cysteine 78–cysteine 83.

The protein belongs to the three-finger toxin family. Long-chain subfamily. Type II alpha-neurotoxin sub-subfamily. In terms of tissue distribution, expressed by the venom gland.

It is found in the secreted. Binds with high affinity to muscular (alpha-1/CHRNA1) and neuronal (alpha-7/CHRNA7) nicotinic acetylcholine receptor (nAChR) and inhibits acetylcholine from binding to the receptor, thereby impairing neuromuscular and neuronal transmission. This chain is Long neurotoxin LlLong, found in Laticauda laticaudata (Blue-ringed sea krait).